Consider the following 400-residue polypeptide: Protein transport protein HofC homolog (400 aa).

A run of 3 helical transmembrane segments spans residues 165–185 (YPIIILAMAIMVVVAMLHFVL), 209–229 (LADFSGEWSWLLVLFGFLLAI), and 370–390 (LLIITGGIIGTLVVAMYLPIF).

The protein belongs to the GSP F family.

It localises to the cell inner membrane. The protein is Protein transport protein HofC homolog (hofC) of Escherichia coli (strain K12).